A 154-amino-acid chain; its full sequence is Plastocyanin, chloroplastic (154 aa).

Residues 1-57 constitute a chloroplast transit peptide; that stretch reads MAALSSAAVTIPSMAPSAPGRRRMRSSLVVRASLGKAAGAAAVAVAASAMLAGGAMA. The Plastocyanin-like domain maps to 58–154; the sequence is QEVLLGANGG…AGMVGKVTVN (97 aa). Residues histidine 94, cysteine 139, histidine 142, and methionine 147 each coordinate Cu cation.

It belongs to the plastocyanin family. The cofactor is Cu(2+).

Its subcellular location is the plastid. The protein localises to the chloroplast thylakoid membrane. Its function is as follows. Participates in electron transfer between P700 and the cytochrome b6-f complex in photosystem I. This Oryza sativa subsp. indica (Rice) protein is Plastocyanin, chloroplastic (PETE).